Consider the following 468-residue polypeptide: Chromatin assembly factor 1 subunit B (468 aa).

WD repeat units lie at residues 11–52 (HDSQ…NGQN), 69–108 (HHEQAINVIRFNSKGDVLASAGDDGQVLLWKQEDPNTQQE), 143–182 (TAAAEIYDLAWSPDNRNIVVACMDNSIRLFDVGAGMLVCG), 185–224 (DHGHYVQGVAWDPLNQFILSQSADRSLHVYGVILSSAGVV), and 371–413 (IHYS…SRIE).

Belongs to the WD repeat HIR1 family. In terms of assembly, component of chromatin assembly factor 1 (CAF-1), composed of MSI1/p50, CAC2/p60 and CAC1/p90. Interacts with RTT106.

It is found in the nucleus. Its function is as follows. Acts as a component of the histone chaperone complex chromatin assembly factor 1 (CAF-1), which assembles histone octamers onto replicating DNA. It performs the first step of the nucleosome assembly process, bringing newly synthesized histones H3 and H4 to replicating DNA; histones H2A/H2B can bind to this chromatin precursor subsequent to DNA replication to complete the histone octamer. Plays a role in the maintenance of heterochromatin. In Saccharomyces cerevisiae (strain ATCC 204508 / S288c) (Baker's yeast), this protein is Chromatin assembly factor 1 subunit B (CAC2).